The primary structure comprises 282 residues: Undecaprenyl-diphosphatase (282 aa).

The next 6 helical transmembrane spans lie at 51–71 (TLVAVLLYFWKDIFIIVAAVI), 87–107 (MGWMIVAGTIPIVIFGKLFET), 115–135 (SLYWISGSLIGLAIILFLAEG), 191–211 (ATAARFSFLLSLPAVFAAGLY), 229–249 (NILVATLVAGIVGYASIAFLL), and 259–279 (IFIAYRLVAGTAILYLVATGV).

This sequence belongs to the UppP family.

Its subcellular location is the cell inner membrane. It carries out the reaction di-trans,octa-cis-undecaprenyl diphosphate + H2O = di-trans,octa-cis-undecaprenyl phosphate + phosphate + H(+). In terms of biological role, catalyzes the dephosphorylation of undecaprenyl diphosphate (UPP). Confers resistance to bacitracin. This chain is Undecaprenyl-diphosphatase, found in Pelodictyon phaeoclathratiforme (strain DSM 5477 / BU-1).